Reading from the N-terminus, the 218-residue chain is Protein-L-isoaspartate O-methyltransferase (218 aa).

Ser60 is a catalytic residue.

The protein belongs to the methyltransferase superfamily. L-isoaspartyl/D-aspartyl protein methyltransferase family.

The protein localises to the cytoplasm. It carries out the reaction [protein]-L-isoaspartate + S-adenosyl-L-methionine = [protein]-L-isoaspartate alpha-methyl ester + S-adenosyl-L-homocysteine. Its function is as follows. Catalyzes the methyl esterification of L-isoaspartyl residues in peptides and proteins that result from spontaneous decomposition of normal L-aspartyl and L-asparaginyl residues. It plays a role in the repair and/or degradation of damaged proteins. The polypeptide is Protein-L-isoaspartate O-methyltransferase (Roseiflexus castenholzii (strain DSM 13941 / HLO8)).